The primary structure comprises 292 residues: tRNA (adenine(9)-N1)-methyltransferase (292 aa).

The SAM-dependent MTase TRM10-type domain occupies 72–253 (TFRKGGKKVS…ISLQSKSDKI (182 aa)).

Belongs to the class IV-like SAM-binding methyltransferase superfamily. TRM10 family.

It is found in the cytoplasm. It carries out the reaction adenosine(9) in tRNA + S-adenosyl-L-methionine = N(1)-methyladenosine(9) in tRNA + S-adenosyl-L-homocysteine + H(+). Functionally, catalyzes the S-adenosyl-L-methionine-dependent formation of N(1)-methyladenine at position 9 (m1A9) in tRNA. This chain is tRNA (adenine(9)-N1)-methyltransferase, found in Sulfolobus acidocaldarius (strain ATCC 33909 / DSM 639 / JCM 8929 / NBRC 15157 / NCIMB 11770).